The following is a 541-amino-acid chain: Paromamine 6'-oxidase (541 aa).

The interval 1-29 (MKRLRGTLPSDARHAWHPEPLGPAHRDGW) is disordered. The active-site Proton acceptor is the H470.

This sequence belongs to the GMC oxidoreductase family. Requires FAD as cofactor.

The catalysed reaction is 6'''-deamino-6'''-hydroxyneomycin C + O2 = 6'''-deamino-6'''-oxoneomycin C + H2O2. It catalyses the reaction paromamine + O2 = 6'-oxoparomamine + H2O2. It functions in the pathway antibiotic biosynthesis; neomycin biosynthesis. Functionally, glucosaminyl-6'-oxidase involved in the biosynthetic pathway of neomycin by mediating FAD-dependent dehydrogenation of paromamine to 6'-dehydro-6'-oxoparomamine. Works in combination with neamine transaminase to replace the 6-hydroxy group of paromamine with an amino group. Also able to collaborate with neomycin C transaminase to replace the 6'''-hydroxy group of 6'''-hydroxyneomycin C with an amino group. The protein is Paromamine 6'-oxidase (neoG) of Streptomyces fradiae (Streptomyces roseoflavus).